Consider the following 190-residue polypeptide: NADH-dependent phenylglyoxylate dehydrogenase subunit gamma (190 aa).

As to quaternary structure, dimer of heteropentamers composed of an alpha (PadG), a beta (PadI), a gamma (PadE), a delta (PadF) and an epsilon (PadH) subunit.

It carries out the reaction phenylglyoxylate + NAD(+) + CoA = benzoyl-CoA + CO2 + NADH. Activated by magnesium ions and thiamine diphosphate. Involved in the anaerobic metabolism of phenylalanine and phenylacetate. Catalyzes the oxidative decarboxylation of phenylglyoxylate to benzoyl-CoA and CO(2). It can also react slowly with 2-oxo-3-methylbutanoate and use different electron acceptors such as benzyl viologen, methyl viologen, FAD or FMN, but NAD seems to be the physiological electron acceptor. Also catalyzes an isotope exchange between CO(2) and the carboxyl group which proves partial or complete reversibility of the oxidative decarboxylation reaction. This chain is NADH-dependent phenylglyoxylate dehydrogenase subunit gamma (padE), found in Aromatoleum evansii (Azoarcus evansii).